Here is a 583-residue protein sequence, read N- to C-terminus: MNNRQATTIWSAVLVEELIRQNASMFCISPGSRSTPLTAAVARNPRASWKMFPDERSAGFFALGHARATGRPAVLVCTSGTAVANYFPAVVEASADFVPMIVISADRPFDLQECGANQTIRQDGIFGRYARWHMQLPQPSTEIPLQSLLSTVEHAVAKSLGAPRGPVHLNQPFREPFDPEPLEGQDPWLEPLQAWKLDGRPRTSSAQPERRPDARAMATIRELLATARRPLLIAGSIPSPDDARAVASLADDLRIPLYADLSSGLRLTEGTLAWQQAFATPAFLGRFRPDLVVHFGGRLIARHPSAALKAWKPAHYVVIREHPERYAPDHPVSLSLESSLQTAAEGLMGCRSEPSAIKEPAEGFFLHCSGALDDLTEASIPLSEISAARQISQLITPGEALFTSNSMSVRELDSFAAALQPDGLPCGLNRGASGIDGIISTAAGYGEGLGRKVTLLIGDIAFLHDLNALSLLRSLSRPMRIVLLNNNGGGIFSFLPVASCNDIFEEHFATPQHFHAQHAAGMFGLRYAAPRTNREFEECFLAAGEAPQSTIIEIASSRSENVEQHRTLQARFNAFAETAFTDR.

The protein belongs to the TPP enzyme family. MenD subfamily. As to quaternary structure, homodimer. It depends on Mg(2+) as a cofactor. Mn(2+) is required as a cofactor. The cofactor is thiamine diphosphate.

It carries out the reaction isochorismate + 2-oxoglutarate + H(+) = 5-enolpyruvoyl-6-hydroxy-2-succinyl-cyclohex-3-ene-1-carboxylate + CO2. It participates in quinol/quinone metabolism; 1,4-dihydroxy-2-naphthoate biosynthesis; 1,4-dihydroxy-2-naphthoate from chorismate: step 2/7. The protein operates within quinol/quinone metabolism; menaquinone biosynthesis. Functionally, catalyzes the thiamine diphosphate-dependent decarboxylation of 2-oxoglutarate and the subsequent addition of the resulting succinic semialdehyde-thiamine pyrophosphate anion to isochorismate to yield 2-succinyl-5-enolpyruvyl-6-hydroxy-3-cyclohexene-1-carboxylate (SEPHCHC). The chain is 2-succinyl-5-enolpyruvyl-6-hydroxy-3-cyclohexene-1-carboxylate synthase from Chlorobium luteolum (strain DSM 273 / BCRC 81028 / 2530) (Pelodictyon luteolum).